The primary structure comprises 108 residues: Competence protein ComGC (108 aa).

Residues 1 to 13 form the signal peptide; that stretch reads MKKMMTFLKKAKV. The may be involved in polymerization of ComGC stretch occupies residues 14-39; the sequence is KAFTLVEMLVVLLIISVLFLLFVPNL. Phenylalanine 16 bears the N-methylphenylalanine mark. The helical transmembrane segment at 16–36 threads the bilayer; that stretch reads FTLVEMLVVLLIISVLFLLFV.

Belongs to the ComGC family. The transformation pili are flexible filaments, consisting mainly of the major pilin ComGC and smaller amounts of the minor pilins, including at least ComGD, ComGF and ComGG, and perhaps ComGE. Homodimer. Forms higher-order multimers. Interacts with ComGG; the interaction is probably direct. In terms of processing, undergoes proteolytic cleavage.

Its subcellular location is the cell membrane. The protein localises to the cell surface. It localises to the fimbrium. It is found in the secreted. Functionally, major component of the type IV-like pilus (T4P) that plays a role in transformation. Transformation pili are dynamically extended and retracted, perhaps thereby promoting DNA uptake and transformation. Required for transformation. Required for DNA binding. This Streptococcus pneumoniae (strain ATCC BAA-255 / R6) protein is Competence protein ComGC.